Consider the following 248-residue polypeptide: Inner membrane protein pE248R (248 aa).

Residue Gly-2 is the site of N-myristoyl glycine; by host attachment. Topologically, residues 2 to 199 (GGSTSKNSFK…ADAISAVFKN (198 aa)) are cytoplasmic. Residues 200–220 (IMVAAVVIVLIIVGFIAVFYF) form a helical membrane-spanning segment. Topologically, residues 221 to 248 (LHSRHRHEEEEEAEPLISNKVLKNAAVS) are extracellular.

Belongs to the asfivirus E248R family. Interacts with A151R.

Its subcellular location is the host membrane. The protein localises to the virion membrane. In terms of biological role, essential for viral fusion with host endosomal membrane and core release. In Ornithodoros (relapsing fever ticks), this protein is Inner membrane protein pE248R.